The chain runs to 139 residues: Ribonuclease VapC36 (139 aa).

Positions 1–127 (MIVDTSAVVA…GNDFPQTDLE (127 aa)) constitute a PINc domain. Positions 4 and 100 each coordinate Mg(2+).

The protein belongs to the PINc/VapC protein family. Requires Mg(2+) as cofactor.

Its function is as follows. Toxic component of a type II toxin-antitoxin (TA) system. An RNase. Its cognate antitoxin is VapB36. This is Ribonuclease VapC36 from Mycobacterium tuberculosis (strain ATCC 25618 / H37Rv).